The following is a 318-amino-acid chain: tRNA-modifying protein YgfZ (318 aa).

The folate site is built by W24 and W185.

It belongs to the tRNA-modifying YgfZ family.

Its subcellular location is the cytoplasm. Folate-binding protein involved in regulating the level of ATP-DnaA and in the modification of some tRNAs. It is probably a key factor in regulatory networks that act via tRNA modification, such as initiation of chromosomal replication. The protein is tRNA-modifying protein YgfZ of Buchnera aphidicola subsp. Baizongia pistaciae (strain Bp).